The chain runs to 398 residues: Tryptophan synthase beta chain (398 aa).

N6-(pyridoxal phosphate)lysine is present on K87.

This sequence belongs to the TrpB family. In terms of assembly, tetramer of two alpha and two beta chains. Requires pyridoxal 5'-phosphate as cofactor.

The enzyme catalyses (1S,2R)-1-C-(indol-3-yl)glycerol 3-phosphate + L-serine = D-glyceraldehyde 3-phosphate + L-tryptophan + H2O. The protein operates within amino-acid biosynthesis; L-tryptophan biosynthesis; L-tryptophan from chorismate: step 5/5. Its function is as follows. The beta subunit is responsible for the synthesis of L-tryptophan from indole and L-serine. This chain is Tryptophan synthase beta chain, found in Blochmanniella floridana.